Reading from the N-terminus, the 1962-residue chain is Myosin heavy chain, muscle (1962 aa).

Residues 33-82 (DSKKSCWIPDEKEGYLLGEIKATKGDIVSVGLQGGEVRDIKSEKVEKVNP) enclose the Myosin N-terminal SH3-like domain. Residues 86-777 (EKIEDMADMT…VLGQMEEFRD (692 aa)) enclose the Myosin motor domain. 179–186 (GESGAGKT) is an ATP binding site. Residues 656 to 678 (LNSLMTTLRSTQPHFVRCIIPNE) form an actin-binding region. Residues 780-809 (LGKIMSWMQAWARGYLSRKGFKKLQEQRVA) enclose the IQ domain. Positions 802-1927 (KLQEQRVALK…KFRAKGRAGS (1126 aa)) form a coiled coil. Disordered regions lie at residues 1822-1862 (ENEL…NHER) and 1922-1962 (KGRA…ENEF).

It belongs to the TRAFAC class myosin-kinesin ATPase superfamily. Myosin family. As to quaternary structure, muscle myosin is a hexameric protein that consists of 2 heavy chain subunits (MHC), 2 alkali light chain subunits (MLC) and 2 regulatory light chain subunits (MLC-2). Expressed in larval and adult muscles. Isoforms containing exon 9a are expressed in indirect flight muscles, exons 9a and 9b are expressed in jump muscles, exons 9b and 9c are expressed in other larval and adult muscles.

The protein localises to the cytoplasm. It is found in the myofibril. In terms of biological role, muscle contraction. The protein is Myosin heavy chain, muscle (Mhc) of Drosophila melanogaster (Fruit fly).